A 352-amino-acid polypeptide reads, in one-letter code: Lipopolysaccharide core biosynthesis mannosyltransferase LpcC (352 aa).

This sequence belongs to the glycosyltransferase group 1 family. Glycosyltransferase 4 subfamily.

It functions in the pathway bacterial outer membrane biogenesis; LPS core biosynthesis. Its function is as follows. Acts at transfer of mannose group to a 3-deoxy-D-mono octulonic acid (KDO) via an alpha-1,5 linkage. The polypeptide is Lipopolysaccharide core biosynthesis mannosyltransferase LpcC (lpcC) (Rhizobium leguminosarum bv. viciae).